The sequence spans 182 residues: Isopentenyl-diphosphate Delta-isomerase (182 aa).

Mn(2+) is bound by residues His25 and His32. The Nudix hydrolase domain occupies 30–164; it reads LLHLAFSSWL…PWAFSPWMVM (135 aa). Cys67 is a catalytic residue. A Mg(2+)-binding site is contributed by Cys67. Mn(2+) is bound at residue His69. Glu87 is a binding site for Mg(2+). Residues Glu114 and Glu116 each coordinate Mn(2+). The active site involves Glu116.

This sequence belongs to the IPP isomerase type 1 family. In terms of assembly, homodimer. The cofactor is Mg(2+). Mn(2+) serves as cofactor.

The protein localises to the cytoplasm. It carries out the reaction isopentenyl diphosphate = dimethylallyl diphosphate. It participates in isoprenoid biosynthesis; dimethylallyl diphosphate biosynthesis; dimethylallyl diphosphate from isopentenyl diphosphate: step 1/1. Its function is as follows. Catalyzes the 1,3-allylic rearrangement of the homoallylic substrate isopentenyl (IPP) to its highly electrophilic allylic isomer, dimethylallyl diphosphate (DMAPP). The protein is Isopentenyl-diphosphate Delta-isomerase of Shigella boydii serotype 4 (strain Sb227).